Consider the following 498-residue polypeptide: POU domain protein 2, isoform A (498 aa).

The segment covering 1 to 30 (MMVLQQQQQQRLWDATTTSNTNTQTQQSAN) has biased composition (low complexity). The tract at residues 1–35 (MMVLQQQQQQRLWDATTTSNTNTQTQQSANVESTP) is disordered. 5 positions are modified to phosphoserine: S72, S211, S215, S217, and S219. Positions 191–273 (QMKQQQREDP…STPKPTSGLT (83 aa)) are disordered. Low complexity predominate over residues 207–222 (PLAKSPLRSPSLSPVP). Residues 228 to 251 (QQRTPPNSMTANSLGMSSAVMTPN) show a composition bias toward polar residues. A compositionally biased stretch (low complexity) spans 252–270 (TPSMQQQPQLQQSTPKPTS). The 75-residue stretch at 286 to 360 (EETTDLEELE…LLQKWLEDAD (75 aa)) folds into the POU-specific domain. A DNA-binding region (homeobox) is located at residues 391 to 450 (RRKKRTSIETTVRTTLEKAFLMNCKPTSEEISQLSERLNMDKEVIRVWFCNRRQKEKRIN).

The protein belongs to the POU transcription factor family. Class-2 subfamily. In terms of tissue distribution, initial expression in cellular blastoderm stage, then in ectodermal stripes during germband extension. Broad expression in the neuroectoderm followed by limitation to discrete subsets of CNS cells, and expression in specific PNS neurons and support cells.

The protein localises to the nucleus. Functionally, DNA-binding regulatory protein implicated in early development. Involved in neuronal cell fate decision. May act as an octamer-dependent activator of transcription. Could also play an early role in specific ectodermal cells, and a subsequent role in the embryonic nervous system. This is POU domain protein 2, isoform A (pdm2) from Drosophila melanogaster (Fruit fly).